A 146-amino-acid chain; its full sequence is Hemoglobin A/D subunit beta (146 aa).

The region spanning 2 to 146 is the Globin domain; that stretch reads HWTSEEKQYI…VAHALALGYH (145 aa). Residues His-63 and His-92 each contribute to the heme b site.

The protein belongs to the globin family. In terms of assembly, hemoglobins A and D are heterotetramers of alpha-1, alpha-2 and two identical beta chains. Red blood cells.

Involved in oxygen transport from the lung to the various peripheral tissues. The protein is Hemoglobin A/D subunit beta of Aldabrachelys gigantea (Aldabra giant tortoise).